A 101-amino-acid chain; its full sequence is Small ribosomal subunit protein uS14 (101 aa).

The protein belongs to the universal ribosomal protein uS14 family. Part of the 30S ribosomal subunit. Contacts proteins S3 and S10.

In terms of biological role, binds 16S rRNA, required for the assembly of 30S particles and may also be responsible for determining the conformation of the 16S rRNA at the A site. The polypeptide is Small ribosomal subunit protein uS14 (Sphingopyxis alaskensis (strain DSM 13593 / LMG 18877 / RB2256) (Sphingomonas alaskensis)).